The primary structure comprises 344 residues: tRNA N6-adenosine threonylcarbamoyltransferase (344 aa).

Fe cation contacts are provided by His-112 and His-116. Residues 134 to 138, Asp-167, Gly-180, and Asn-280 contribute to the substrate site; that span reads LASGG. Residue Asp-308 participates in Fe cation binding.

Belongs to the KAE1 / TsaD family. It depends on Fe(2+) as a cofactor.

It localises to the cytoplasm. It catalyses the reaction L-threonylcarbamoyladenylate + adenosine(37) in tRNA = N(6)-L-threonylcarbamoyladenosine(37) in tRNA + AMP + H(+). In terms of biological role, required for the formation of a threonylcarbamoyl group on adenosine at position 37 (t(6)A37) in tRNAs that read codons beginning with adenine. Is involved in the transfer of the threonylcarbamoyl moiety of threonylcarbamoyl-AMP (TC-AMP) to the N6 group of A37, together with TsaE and TsaB. TsaD likely plays a direct catalytic role in this reaction. The polypeptide is tRNA N6-adenosine threonylcarbamoyltransferase (Rickettsia conorii (strain ATCC VR-613 / Malish 7)).